Reading from the N-terminus, the 211-residue chain is Arginine exporter protein ArgO (211 aa).

The next 6 membrane-spanning stretches (helical) occupy residues 1-21 (MFTY…PLGP), 37-57 (LMIA…GIFG), 68-88 (LLAI…FGAL), 111-131 (IIIT…DTFV), 147-167 (WFAL…ALLA), and 182-202 (IINI…AKEG).

This sequence belongs to the LysE/ArgO transporter (TC 2.A.75) family.

Its subcellular location is the cell inner membrane. The catalysed reaction is L-arginine(in) = L-arginine(out). Its function is as follows. Involved in the export of arginine. Important to control the intracellular level of arginine and the correct balance between arginine and lysine. In Klebsiella pneumoniae (strain 342), this protein is Arginine exporter protein ArgO.